The sequence spans 116 residues: Putative antiporter subunit mnhC2 (116 aa).

3 helical membrane passes run 3–23, 28–48, and 72–92; these read LILL…ILSV, IVIG…SMGN, and AIVL…LVLV.

Belongs to the CPA3 antiporters (TC 2.A.63) subunit C family. May form a heterooligomeric complex that consists of seven subunits: mnhA2, mnhB2, mnhC2, mnhD2, mnhE2, mnhF2 and mnhG2.

The protein resides in the cell membrane. In Staphylococcus saprophyticus subsp. saprophyticus (strain ATCC 15305 / DSM 20229 / NCIMB 8711 / NCTC 7292 / S-41), this protein is Putative antiporter subunit mnhC2 (mnhC2).